Consider the following 660-residue polypeptide: Cysteine-rich receptor-like protein kinase 22 (660 aa).

The N-terminal stretch at 1 to 24 (MKQRSFLSILCFILLAFGVASVSA) is a signal peptide. Gnk2-homologous domains are found at residues 25–128 (QTCI…NISF) and 137–250 (IEPQ…LFTF). Residues 25–294 (QTCIENRKYF…DSRGVSAGIV (270 aa)) are Extracellular-facing. N-linked (GlcNAc...) asparagine glycans are attached at residues Asn-37, Asn-53, Asn-105, Asn-125, Asn-191, Asn-230, and Asn-256. Over residues 264–273 (KPPMNVPRPP) the composition is skewed to pro residues. A disordered region spans residues 264–283 (KPPMNVPRPPSVGHGANTTD). 2 N-linked (GlcNAc...) asparagine glycosylation sites follow: Asn-280 and Asn-284. A helical membrane pass occupies residues 295-315 (VVITVPAVVIVLILVVLGFFI). Residues 316-660 (CWRRKSLQRT…DPLSEGLESG (345 aa)) lie on the Cytoplasmic side of the membrane. A Protein kinase domain is found at 353 to 632 (FSKSNKLGEG…IVSMLTSNTI (280 aa)). ATP is bound by residues 359 to 367 (LGEGRFGEV) and Lys-381. At Tyr-426 the chain carries Phosphotyrosine. Asp-478 serves as the catalytic Proton acceptor. At Ser-482 the chain carries Phosphoserine. A Phosphothreonine modification is found at Thr-518. Tyr-526 carries the phosphotyrosine modification.

It belongs to the protein kinase superfamily. Ser/Thr protein kinase family. CRK subfamily.

The protein localises to the membrane. It catalyses the reaction L-seryl-[protein] + ATP = O-phospho-L-seryl-[protein] + ADP + H(+). It carries out the reaction L-threonyl-[protein] + ATP = O-phospho-L-threonyl-[protein] + ADP + H(+). The polypeptide is Cysteine-rich receptor-like protein kinase 22 (CRK22) (Arabidopsis thaliana (Mouse-ear cress)).